The chain runs to 527 residues: Putative WEB family protein At4g17210 (527 aa).

Disordered regions lie at residues 1–28 (MAKI…IDTR) and 46–70 (FSKK…TDVS). Residues 55–68 (SSSSSSQSQDTTTD) show a composition bias toward low complexity. Coiled-coil stretches lie at residues 95–159 (AAKA…YILI), 202–389 (SNKI…AKHM), and 436–513 (KKIR…EAHS).

It belongs to the WEB family.

The chain is Putative WEB family protein At4g17210 from Arabidopsis thaliana (Mouse-ear cress).